Here is a 288-residue protein sequence, read N- to C-terminus: Cyclin-dependent kinase 2 homolog (288 aa).

Residues 4 to 284 enclose the Protein kinase domain; it reads YHGLEKIGEG…AKEALQHAYF (281 aa). ATP-binding positions include 10 to 18 and K32; that span reads IGEGTYGVV. Residue T14 is modified to Phosphothreonine. Y15 is subject to Phosphotyrosine. The Proton acceptor role is filled by D125. At T158 the chain carries Phosphothreonine.

Belongs to the protein kinase superfamily. CMGC Ser/Thr protein kinase family. CDC2/CDKX subfamily. As to quaternary structure, may form a complex composed of at least the catalytic subunit CRK2 and a cyclin. Mg(2+) serves as cofactor.

The protein resides in the cytoplasm. It carries out the reaction L-seryl-[protein] + ATP = O-phospho-L-seryl-[protein] + ADP + H(+). The catalysed reaction is L-threonyl-[protein] + ATP = O-phospho-L-threonyl-[protein] + ADP + H(+). It catalyses the reaction [DNA-directed RNA polymerase] + ATP = phospho-[DNA-directed RNA polymerase] + ADP + H(+). Its activity is regulated as follows. Phosphorylation at Thr-14 or Tyr-15 inactivates the enzyme, while phosphorylation at Thr-158 activates it. Serine/threonine-protein kinase. Involved in the control of the cell cycle. Required for entry into S-phase and mitosis. Probable component of the kinase complex that phosphorylates the repetitive C-terminus of RNA polymerase II. The protein is Cyclin-dependent kinase 2 homolog of Plasmodium knowlesi (strain H).